We begin with the raw amino-acid sequence, 537 residues long: Probable E3 ubiquitin-protein ligase ARI3 (537 aa).

The tract at residues 1-30 (MDDDYMMLDDDYGEEEDENYSEDDNYSEAE) is disordered. Residues 117 to 331 (KTMKCDVCME…IAGHSCGRYK (215 aa)) are TRIAD supradomain. The Zn(2+) site is built by C121, C124, C139, H141, C144, C147, C166, C171, C210, C216, C234, C236, C241, C244, H249, C254, C281, and C284. The RING-type 1 zinc-finger motif lies at 121–171 (CDVCMEDDLPSNVMTRMECGHRFCNDCWIGHFTVKINEGESKRILCMAHEC). An IBR-type zinc finger spans residues 190 to 254 (DRYDRFLIES…LSESHSPCSC (65 aa)). The RING-type 2; atypical zinc-finger motif lies at 281-309 (CPKCSKPIQKRDGCNLMTCKCGQHFCWLC). C294 is a catalytic residue. Residues C299, C301, C306, C309, H317, and C327 each contribute to the Zn(2+) site.

It belongs to the RBR family. Ariadne subfamily. Requires Zn(2+) as cofactor. Ubiquitous.

It catalyses the reaction [E2 ubiquitin-conjugating enzyme]-S-ubiquitinyl-L-cysteine + [acceptor protein]-L-lysine = [E2 ubiquitin-conjugating enzyme]-L-cysteine + [acceptor protein]-N(6)-ubiquitinyl-L-lysine.. It functions in the pathway protein modification; protein ubiquitination. Functionally, might act as an E3 ubiquitin-protein ligase, or as part of E3 complex, which accepts ubiquitin from specific E2 ubiquitin-conjugating enzymes and then transfers it to substrates. This is Probable E3 ubiquitin-protein ligase ARI3 (ARI3) from Arabidopsis thaliana (Mouse-ear cress).